The chain runs to 121 residues: Large ribosomal subunit protein uL18 (121 aa).

The protein belongs to the universal ribosomal protein uL18 family. In terms of assembly, part of the 50S ribosomal subunit; part of the 5S rRNA/L5/L18/L25 subcomplex. Contacts the 5S and 23S rRNAs.

Its function is as follows. This is one of the proteins that bind and probably mediate the attachment of the 5S RNA into the large ribosomal subunit, where it forms part of the central protuberance. The sequence is that of Large ribosomal subunit protein uL18 from Streptococcus equi subsp. zooepidemicus (strain MGCS10565).